A 506-amino-acid chain; its full sequence is Nostrin (506 aa).

Residues 1 to 260 enclose the F-BAR domain; sequence MRDPLTDCPY…AISKIDIEKD (260 aa). Phosphoserine is present on serine 114. A coiled-coil region spans residues 160–222; the sequence is SMTEKEKRKL…LELEKERIQL (63 aa). Residues 292-372 enclose the REM-1 domain; sequence AMDKERRKSL…SYKLSSMLAE (81 aa). An SH3 domain is found at 438 to 497; the sequence is LSSRLCKALYSFQARQDDELNLEKGDIVIIHEKKEGGWWFGSLNGKKGHFPAAYVEELPS. Serine 479 is modified (phosphoserine).

Homotrimer. Interacts with DAB2. Interacts with NOS3, DNM2, WASL and CAV1. Interacts (via SH3 domain) with DNM2; this interaction allows the recruitment of NOS3 to dynamin-positive structures. As to expression, expressed at highest levels in heart, kidney, placenta and lung, and at lowest levels in brain, thymus and spleen. Present in vascular endothelial cells and placenta. Over-expressed in placenta from women with pre-eclampsia (at protein level).

Its subcellular location is the cell membrane. It localises to the cytoplasmic vesicle. The protein resides in the cytoplasm. It is found in the cytoskeleton. The protein localises to the nucleus. Functionally, multivalent adapter protein which may decrease NOS3 activity by inducing its translocation away from the plasma membrane. In Homo sapiens (Human), this protein is Nostrin.